Reading from the N-terminus, the 467-residue chain is MFEQPSSTTNTTTSSGSGSDSNHYFELGPRNPINQAHPTSVIVPPRQHHHQIHQQQTDNSPLTPCTPYYPSNAYGLPLFFGTDFLQFQPSDIPSPLTPNISSPLTPHPFGPIPAIPTNQIYNRTFTDFYSTAASSPMVQYSTVKKSSAGRKPKEEDNMEDDDDDKRLKRRQRNKEAAARCRQRRIDLMKELQDQVNDFKNSNDKKMAECNNIRNKLNSLKNYLETHDCKLSREERTHEINRLIIPPSTVPPSQPYLQHSLRVHPPRADSVPYSIRSGHSSSSSEQHSPVEDYKPSIDQLLLPPISCIQNIKDRNINSMPPPALPASTSAAGIHVITSIPVSHANSLHGRSENVFAEPERKIPKIELDQTLTSLTMPDDVERPSALPTLSRIVENQPITTPSRPFRLGGEYQNQTPQSTGNGLFGGPPGPFDLLSSNTGLTPSGQPTMNFVSTPTPIQPHPDADLRPL.

Low complexity predominate over residues 1-22 (MFEQPSSTTNTTTSSGSGSDSN). 2 disordered regions span residues 1–38 (MFEQ…QAHP) and 139–179 (QYST…AAAR). In terms of domain architecture, bZIP spans 163–226 (DDKRLKRRQR…NSLKNYLETH (64 aa)). A basic motif region spans residues 165-205 (KRLKRRQRNKEAAARCRQRRIDLMKELQDQVNDFKNSNDKK). The leucine-zipper stretch occupies residues 212–219 (IRNKLNSL). 2 disordered regions span residues 266 to 291 (RADS…PVED) and 395 to 467 (QPIT…LRPL). The span at 273-286 (SIRSGHSSSSSEQH) shows a compositional bias: low complexity. Residues 434–454 (SSNTGLTPSGQPTMNFVSTPT) are compositionally biased toward polar residues. Thr-440, Thr-452, and Thr-454 each carry phosphothreonine.

The protein belongs to the bZIP family. Fos subfamily. As to quaternary structure, homodimer. Heterodimer; with jun-1. Interacts with kgb-1 and hda-1. Post-translationally, may be phosphorylated by kgb-1. Phosphorylation at Thr-440 increases sensitivity to heavy metal stress. Phosphorylation inhibits homodimer formation, and promotes association with target promoters. In terms of tissue distribution, expressed in anchor cells. Isoform a is expressed in somatic gonad cells that neighbor anchor cells. Isoform b is expressed in vulval cells, the uterine cells that neighbor anchor cells and the spermatheca.

The protein resides in the nucleus. Functionally, developmentally regulated transcription factor which binds and recognizes the enhancer DNA sequence 5'-TGA[CG]TCA-3'. Its function is as follows. Plays a role the development of the reproductive system, controlling events including anchor cell (AC) fusion and invasion. Regulates downstream transcriptional targets, including zmp-1, cdh-3, him-4 and mig10b, to promote the removal of the gonadal basement membrane during AC invasion. Regulates aff-1 expression to promote AC fusion. With jun-1 regulates egl-1 and lin-12 expression to allow uterine cell specification and development. In terms of biological role, required for ovulation. Controls plc-1 expression in the spermatheca to regulate spermathecal valve dilation. Acts with hda-1 as a downstream repressor of the kgb-1 mediated stress response pathway that transcriptionally represses genes involved in the response to heavy metals, such as kreg-1. The chain is Transcription factor fos-1 from Caenorhabditis elegans.